The primary structure comprises 429 residues: Polypyrimidine tract-binding protein homolog 2 (429 aa).

Ser2 carries the N-acetylserine modification. RRM domains lie at 18–96, 110–197, and 243–323; these read KVLH…YSNR, GNVL…YSAH, and SNVL…YSRH. Residues 331–429 form a disordered region; sequence NNDRSRDYTM…QHYGGPGPMH (99 aa). Over residues 367–381 the composition is skewed to low complexity; that stretch reads GGSHHQQQQQPQGGW. Gly residues predominate over residues 382 to 397; the sequence is VQPGGQGSMGMGGGGH.

Its subcellular location is the nucleus. Its function is as follows. Plays a role in pre-mRNA splicing. Binds to the polypyrimidine tract of introns. May promote the binding of U2 snRNP to pre-mRNA. This chain is Polypyrimidine tract-binding protein homolog 2, found in Arabidopsis thaliana (Mouse-ear cress).